The primary structure comprises 574 residues: Kelch-like protein 35 (574 aa).

One can recognise a BTB domain in the interval 40 to 110 (TDVVLRAGGR…VYGAGVRLRA (71 aa)). One can recognise a BACK domain in the interval 146–248 (SLALRRVAAA…APAYFLEKVE (103 aa)). 6 Kelch repeats span residues 292-341 (VIVV…ALRN), 343-385 (IYVS…ALQG), 386-432 (QLFA…PCAG), 434-480 (LYVI…SLED), 481-522 (TIYV…VCDG), and 524-570 (VHIL…TIVQ).

This chain is Kelch-like protein 35 (Klhl35), found in Mus musculus (Mouse).